Reading from the N-terminus, the 523-residue chain is MENGLWEVLGSKGLLKKHEFIRILVQCLYSLGFKNSASCLEFESKILYKTADSEFLEKQVLSGNWDSCVQVLDRIFDNSMDDTRNTALYLVFKQCLLEYLKRGDVSLALNVLRKQAPLLRMGKEKIHRLACDIVYSKEMESGEVDNCLVLDLRRKLLVELEKLIPLPIVIPERRLEHLVETAVMDQIDTCMYHNSCDAVSLYKDHCCGRDQIPSETVQILVAHKNEVWFVQFSNSGKYLATASSDCTAIIWKVLDDNKVELKHTLESHQNPVSFVSWSPDDTKLLTCGNAEVLKLWDVDTGVLRHTFGNNNTGFTVSSCAWFPDSTRLVCGSSDPERGIVMWDTDGNEIKAWRGTRIPKVVDLAVTPDGESMITVFSDKEIRILNLETKVERVISEEQPITSLSISGDGKFFIVNLSCQEIHLWDLAGEWKQPLKFSGHRQSKYVIRSCFGGLDSSFIASGSEDSQVYIWNLKNTKPLEVLSGHSMTVNCVSWNPKNPRMLASASDDQTIRIWGPGKPNKPLN.

The LisH domain occupies 16–48 (KKHEFIRILVQCLYSLGFKNSASCLEFESKILY). Residues 49-107 (KTADSEFLEKQVLSGNWDSCVQVLDRIFDNSMDDTRNTALYLVFKQCLLEYLKRGDVSL) form the CTLH domain. WD repeat units lie at residues 222 to 261 (AHKN…KVEL), 267 to 306 (SHQN…LRHT), 310 to 353 (NNTG…KAWR), 355 to 394 (TRIP…ERVI), 395 to 434 (SEEQ…KQPL), 438 to 480 (GHRQ…PLEV), and 483 to 523 (GHSM…KPLN).

As to quaternary structure, interacts with RANBPM.

It is found in the cytoplasm. The sequence is that of WD repeat-containing protein WDS homolog from Arabidopsis thaliana (Mouse-ear cress).